A 337-amino-acid chain; its full sequence is Methylthioribose-1-phosphate isomerase (337 aa).

Substrate is bound by residues 47 to 49 (RGA), Arg81, and Gln184. Residue Asp225 is the Proton donor of the active site. A substrate-binding site is contributed by 235–236 (NK).

Belongs to the eIF-2B alpha/beta/delta subunits family. MtnA subfamily.

The catalysed reaction is 5-(methylsulfanyl)-alpha-D-ribose 1-phosphate = 5-(methylsulfanyl)-D-ribulose 1-phosphate. Its pathway is amino-acid biosynthesis; L-methionine biosynthesis via salvage pathway; L-methionine from S-methyl-5-thio-alpha-D-ribose 1-phosphate: step 1/6. Catalyzes the interconversion of methylthioribose-1-phosphate (MTR-1-P) into methylthioribulose-1-phosphate (MTRu-1-P). This chain is Methylthioribose-1-phosphate isomerase, found in Parasynechococcus marenigrum (strain WH8102).